We begin with the raw amino-acid sequence, 197 residues long: Guanylate kinase (197 aa).

S2 bears the N-acetylserine mark. Residues 4–186 (PRPVVLSGPS…AYAELKEALS (183 aa)) form the Guanylate kinase-like domain. 14-19 (GAGKST) contributes to the ATP binding site. 37-51 (SHTTRNPRPGEENGK) lines the substrate pocket. Active-site residues include R44, R137, and R148. Residue R137 participates in ATP binding. 171–172 (ND) serves as a coordination point for ATP.

The protein belongs to the guanylate kinase family. Monomer. Interacts with RD3. In terms of tissue distribution, widely expressed.

Its subcellular location is the photoreceptor inner segment. The protein resides in the cytoplasm. The protein localises to the cytosol. It localises to the mitochondrion. It catalyses the reaction GMP + ATP = GDP + ADP. With respect to regulation, up-regulated by RD3. Catalyzes the phosphorylation of GMP to GDP. Essential enzyme for recycling GMP and indirectly, cyclic GMP (cGMP). Involved in the cGMP metabolism in photoreceptors. It may also have a role in the survival and growth progression of some tumors. In addition to its physiological role, GUK1 is essential for converting prodrugs used for the treatment of cancers and viral infections into their pharmacologically active metabolites, most notably acyclovir, ganciclovir, and 6-thioguanine and its closely related analog 6-mercaptopurine. The sequence is that of Guanylate kinase from Homo sapiens (Human).